The sequence spans 505 residues: Calcium/calmodulin-dependent protein kinase kinase 1 (505 aa).

Residues 26–61 form a disordered region; it reads THLEEADGGPEPTRNGVDPPPRARAASVIPGSTSRL. A phosphoserine mark is found at Ser67 and Ser74. Arg78 carries the asymmetric dimethylarginine modification. Phosphoserine is present on Ser100. Thr108 carries the phosphothreonine modification. In terms of domain architecture, Protein kinase spans 128–409; that stretch reads YKLQSEIGKG…VPDIKLHPWV (282 aa). Residues 134 to 142 and Lys157 contribute to the ATP site; that span reads IGKGAYGVV. The segment at 167 to 189 is RP domain; that stretch reads QYGFPRRPPPRGSQAAQGGPAKQ. Asp275 serves as the catalytic Proton acceptor. The tract at residues 435-440 is autoinhibitory domain; the sequence is KNSVRL. Residues 438 to 463 form a calmodulin-binding region; sequence VRLIPSWTTVILVKSMLRKRSFGNPF. Phosphoserine occurs at positions 458, 475, and 492. Residues 460–505 are disordered; that stretch reads GNPFEPQARREERSMSAPGNLLVKEGFGEGGKSPELPGVQEDEAAS.

The protein belongs to the protein kinase superfamily. Ser/Thr protein kinase family. As to quaternary structure, interacts with CAMK4 and calmodulin. In terms of processing, appears to be autophosphorylated in a Ca(2+)/calmodulin-dependent manner. Phosphorylated at multiple sites by PRCAKA/PKA. Phosphorylation of Ser-458 is blocked upon binding to Ca(2+)/calmodulin. In vitro, phosphorylated by CAMK1 and CAMK4.

Its subcellular location is the cytoplasm. The protein resides in the nucleus. The catalysed reaction is L-seryl-[protein] + ATP = O-phospho-L-seryl-[protein] + ADP + H(+). It catalyses the reaction L-threonyl-[protein] + ATP = O-phospho-L-threonyl-[protein] + ADP + H(+). Its activity is regulated as follows. Activated by Ca(2+)/calmodulin. Binding of calmodulin may relieve intrasteric autoinhibition. Partially inhibited upon phosphorylation by PRCAKA/PKA. May be regulated through phosphorylation by CAMK1 and CAMK4. Functionally, calcium/calmodulin-dependent protein kinase that belongs to a proposed calcium-triggered signaling cascade involved in a number of cellular processes. Phosphorylates CAMK1, CAMK1D, CAMK1G and CAMK4. Involved in regulating cell apoptosis. Promotes cell survival by phosphorylating AKT1/PKB that inhibits pro-apoptotic BAD/Bcl2-antagonist of cell death. The chain is Calcium/calmodulin-dependent protein kinase kinase 1 (CAMKK1) from Homo sapiens (Human).